Consider the following 348-residue polypeptide: Ion-translocating oxidoreductase complex subunit D (348 aa).

Helical transmembrane passes span 20 to 39 (VMRL…CYLF), 67 to 87 (YVVS…LIAV), and 124 to 144 (AMVG…NWMA). Residue threonine 187 is modified to FMN phosphoryl threonine. 4 helical membrane passes run 221–241 (WINL…LIPW), 244–264 (PVAM…LAPA), 266–286 (FAMP…FFII), and 300–320 (LVFG…GGYP).

It belongs to the NqrB/RnfD family. In terms of assembly, the complex is composed of six subunits: RnfA, RnfB, RnfC, RnfD, RnfE and RnfG. It depends on FMN as a cofactor.

Its subcellular location is the cell inner membrane. In terms of biological role, part of a membrane-bound complex that couples electron transfer with translocation of ions across the membrane. This Tolumonas auensis (strain DSM 9187 / NBRC 110442 / TA 4) protein is Ion-translocating oxidoreductase complex subunit D.